The primary structure comprises 396 residues: L-lactate dehydrogenase (396 aa).

The FMN hydroxy acid dehydrogenase domain occupies 1–380; it reads MIISAASDYR…SGDSLVQELG (380 aa). Tyr24 serves as a coordination point for substrate. FMN contacts are provided by Ser106 and Gln127. Position 129 (Tyr129) interacts with substrate. Thr155 contributes to the FMN binding site. Arg164 contributes to the substrate binding site. Lys251 contacts FMN. The Proton acceptor role is filled by His275. Arg278 is a substrate binding site. 306–330 is an FMN binding site; it reads DSGIRNGLDVVRMIALGADTVLLGR.

This sequence belongs to the FMN-dependent alpha-hydroxy acid dehydrogenase family. It depends on FMN as a cofactor.

It localises to the cell inner membrane. The catalysed reaction is (S)-lactate + A = pyruvate + AH2. In terms of biological role, catalyzes the conversion of L-lactate to pyruvate. Is coupled to the respiratory chain. This is L-lactate dehydrogenase from Salmonella newport (strain SL254).